The following is a 474-amino-acid chain: Synaptotagmin-17 (474 aa).

Residues 60-112 (WLMASRSSDKDGDSVHTASEVPLTPRTNSPDGRRSSSDTSKSTYSLTRRISSL) form a disordered region. A compositionally biased stretch (low complexity) spans 96 to 112 (SDTSKSTYSLTRRISSL). Serine 118 and serine 119 each carry phosphoserine. 2 C2 domains span residues 184–310 (QLGM…HWWK) and 321–455 (ELGE…EQWH).

This sequence belongs to the synaptotagmin family.

The protein resides in the membrane. Its function is as follows. Plays a role in dendrite formation by melanocytes. This is Synaptotagmin-17 (SYT17) from Pongo abelii (Sumatran orangutan).